A 547-amino-acid chain; its full sequence is Sensor histidine kinase CitA (547 aa).

The Cytoplasmic segment spans residues 1-23 (MSIYPMYTRKITHWFARRSFQNR). Residues 24–44 (IFLLILFTSTIVMLAMSWYLT) form a helical membrane-spanning segment. At 45 to 180 (DITEERLHYQ…TIEQLENWLS (136 aa)) the chain is on the periplasmic side. 4 residues coordinate citrate: R109, H112, R150, and K152. A helical membrane pass occupies residues 181–201 (LQISSLLIPMAIMLLLLLFCA). Over 202-547 (RRFSLHIKKQ…IPLTRDEHHG (346 aa)) the chain is Cytoplasmic. One can recognise a PAS domain in the interval 225-264 (IQQSVLFESVFEGLIAIDSDYKITAINQTARRLLNLSQPE). Residues 347–542 (AVQHEHRNLI…IFTLYIPLTR (196 aa)) enclose the Histidine kinase domain. A Phosphohistidine; by autocatalysis modification is found at H350.

Homodimer. In vitro CitB and the CitA kinase domain form a complex, formation of which is enhanced by ATP. In terms of processing, autophosphorylated.

Its subcellular location is the cell inner membrane. It carries out the reaction ATP + protein L-histidine = ADP + protein N-phospho-L-histidine.. Member of the two-component regulatory system CitA/CitB. Probably activates CitB by phosphorylation. The periplasmic domain binds H-citrate(2-), which is essential for induction of the citrate-fermentation genes. This chain is Sensor histidine kinase CitA (citA), found in Klebsiella pneumoniae.